Here is a 311-residue protein sequence, read N- to C-terminus: Probable cell division protein WhiA (311 aa).

The segment at residues 277–311 is a DNA-binding region (H-T-H motif); it reads TLKEVADQIPDGPISKSGVNHRFKKLHELAETLKE.

Belongs to the WhiA family.

Involved in cell division and chromosome segregation. This chain is Probable cell division protein WhiA, found in Lactobacillus helveticus (strain DPC 4571).